We begin with the raw amino-acid sequence, 241 residues long: MHATEPNTGHGSQRAIRLAPSILSADFARLGEEVCAIEAGGADLVHFDVMDNHYVSNLTIGPLVCEAIRPLVSIPIDVHLMVEPVDALIPMFAKAGANLISFHPEASRHVDRTIGLIRDHGCKAGLVLNPATPLSWLDHTLDKLDLVLLMSVNPGFGGQAFIPGVLDKVRQARARIDRQVAAGGRPVWLEIDGGVKADNITEIARAGADTFVAGSAVFGAPDADGGYRGILHRLREAATIT.

Ser-21 lines the substrate pocket. A divalent metal cation is bound by residues His-46, Asp-48, and His-79. Catalysis depends on Asp-48, which acts as the Proton acceptor. Substrate-binding positions include His-79, 155–158 (GFGG), 192–194 (DGG), and 214–215 (GS). Asp-192 contributes to the a divalent metal cation binding site. The Proton donor role is filled by Asp-192.

This sequence belongs to the ribulose-phosphate 3-epimerase family. It depends on a divalent metal cation as a cofactor.

The enzyme catalyses D-ribulose 5-phosphate = D-xylulose 5-phosphate. It functions in the pathway carbohydrate degradation. Its function is as follows. Catalyzes the reversible epimerization of D-ribulose 5-phosphate to D-xylulose 5-phosphate. The chain is Ribulose-phosphate 3-epimerase 2 from Cupriavidus necator (strain ATCC 17699 / DSM 428 / KCTC 22496 / NCIMB 10442 / H16 / Stanier 337) (Ralstonia eutropha).